The chain runs to 1340 residues: Early transcription factor large subunit homolog (1340 aa).

It localises to the virion. Putative initation factor. This chain is Early transcription factor large subunit homolog, found in Ornithodoros (relapsing fever ticks).